Consider the following 216-residue polypeptide: Probable flavin-dependent thymidylate synthase (216 aa).

A ThyX domain is found at Met1–Val216. FAD-binding positions include Ser55, Arg78–Arg80, and Glu86. DUMP-binding positions include Gln75 to Arg78, Glu86 to Arg90, and Arg155. Positions Arg78 to Ser88 match the ThyX motif motif. His177 provides a ligand contact to FAD. Arg182 lines the dUMP pocket. The active-site Involved in ionization of N3 of dUMP, leading to its activation is the Arg182.

Belongs to the thymidylate synthase ThyX family. In terms of assembly, homotetramer. It depends on FAD as a cofactor.

The catalysed reaction is dUMP + (6R)-5,10-methylene-5,6,7,8-tetrahydrofolate + NADPH + H(+) = dTMP + (6S)-5,6,7,8-tetrahydrofolate + NADP(+). It functions in the pathway pyrimidine metabolism; dTTP biosynthesis. Catalyzes the reductive methylation of 2'-deoxyuridine-5'-monophosphate (dUMP) to 2'-deoxythymidine-5'-monophosphate (dTMP) while utilizing 5,10-methylenetetrahydrofolate (mTHF) as the methyl donor, and NADPH and FADH(2) as the reductant. This is Probable flavin-dependent thymidylate synthase from Paramecium bursaria Chlorella virus 1 (PBCV-1).